The primary structure comprises 195 residues: uncharacterized protein (195 aa).

2 disordered regions span residues 1 to 51 (MTHN…GPSY) and 160 to 195 (SYSQQQEPQHYYKKHKHHSHHRPKHVKSSRSCKSCN). Polar residues predominate over residues 13 to 28 (SYQNQAPQPQYYTRQP). Basic residues predominate over residues 170–189 (YYKKHKHHSHHRPKHVKSSR).

This is an uncharacterized protein from Acanthamoeba polyphaga mimivirus (APMV).